The following is a 64-amino-acid chain: uncharacterized protein (64 aa).

Residues 35–64 (TIRKPPIEHAAGPLGSTSRAGHRSYGGVAS) are disordered.

This is an uncharacterized protein from Mycobacterium tuberculosis (strain ATCC 25618 / H37Rv).